The sequence spans 327 residues: Probable cell division protein WhiA (327 aa).

The H-T-H motif DNA-binding region spans 275 to 308 (SLEELGRLADPPMTKDAVAGRIRRLLSMADRKAK).

Belongs to the WhiA family.

Involved in cell division and chromosome segregation. The sequence is that of Probable cell division protein WhiA from Mycobacterium leprae (strain Br4923).